Consider the following 727-residue polypeptide: DNA replication licensing factor MCM5 (727 aa).

One can recognise an MCM domain in the interval 325 to 531 (VYKNICTKIA…SQDKEIASHI (207 aa)). 375 to 382 (GDPSTAKS) contributes to the ATP binding site. Residues 507 to 510 (SRFD) carry the Arginine finger motif.

The protein belongs to the MCM family. Component of the minichromosome maintenance (MCM) complex, a heterotetramer composed of MCM2, MCM3, MCM4, MCM5, MCM6 and MCM7. Interacts with EGT1. As to expression, expressed in shoot apex and flower buds.

The protein localises to the nucleus. It is found in the cytoplasm. It carries out the reaction ATP + H2O = ADP + phosphate + H(+). Its function is as follows. Probable component of the MCM2-7 complex (MCM complex) that may function as a DNA helicase and which is essential to undergo a single round of replication initiation and elongation per cell cycle in eukaryotic cells. In Arabidopsis thaliana (Mouse-ear cress), this protein is DNA replication licensing factor MCM5 (MCM5).